A 133-amino-acid chain; its full sequence is Small ribosomal subunit protein uS8 (133 aa).

This sequence belongs to the universal ribosomal protein uS8 family. Part of the 30S ribosomal subunit. Contacts proteins S5 and S12.

One of the primary rRNA binding proteins, it binds directly to 16S rRNA central domain where it helps coordinate assembly of the platform of the 30S subunit. This chain is Small ribosomal subunit protein uS8, found in Trichormus variabilis (strain ATCC 29413 / PCC 7937) (Anabaena variabilis).